The chain runs to 362 residues: Phosphoserine aminotransferase (362 aa).

L-glutamate is bound at residue Arg-43. Pyridoxal 5'-phosphate is bound by residues 77 to 78 (AT), Trp-103, Thr-153, Asp-173, and Gln-196. Lys-197 is modified (N6-(pyridoxal phosphate)lysine). Position 238–239 (238–239 (NT)) interacts with pyridoxal 5'-phosphate.

This sequence belongs to the class-V pyridoxal-phosphate-dependent aminotransferase family. SerC subfamily. As to quaternary structure, homodimer. The cofactor is pyridoxal 5'-phosphate.

It is found in the cytoplasm. The enzyme catalyses O-phospho-L-serine + 2-oxoglutarate = 3-phosphooxypyruvate + L-glutamate. The catalysed reaction is 4-(phosphooxy)-L-threonine + 2-oxoglutarate = (R)-3-hydroxy-2-oxo-4-phosphooxybutanoate + L-glutamate. Its pathway is amino-acid biosynthesis; L-serine biosynthesis; L-serine from 3-phospho-D-glycerate: step 2/3. It functions in the pathway cofactor biosynthesis; pyridoxine 5'-phosphate biosynthesis; pyridoxine 5'-phosphate from D-erythrose 4-phosphate: step 3/5. Functionally, catalyzes the reversible conversion of 3-phosphohydroxypyruvate to phosphoserine and of 3-hydroxy-2-oxo-4-phosphonooxybutanoate to phosphohydroxythreonine. The chain is Phosphoserine aminotransferase from Xylella fastidiosa (strain 9a5c).